The chain runs to 401 residues: Probable E3 ubiquitin-protein ligase RHC2A (401 aa).

A disordered region spans residues 41–93; sequence TPSDSFTTTTTTQHRSPTRFPPPSSSSSTPSASMHADNSPTPTIVTRTRSNRS. The span at 76–93 shows a compositional bias: polar residues; that stretch reads ADNSPTPTIVTRTRSNRS. The segment at 201 to 242 adopts an RING-type; atypical zinc-finger fold; the sequence is CAVCKENFVLKSSAREMPCNHIYHPDCILPWLAIRNSCPVCR.

It catalyses the reaction S-ubiquitinyl-[E2 ubiquitin-conjugating enzyme]-L-cysteine + [acceptor protein]-L-lysine = [E2 ubiquitin-conjugating enzyme]-L-cysteine + N(6)-ubiquitinyl-[acceptor protein]-L-lysine.. Its pathway is protein modification; protein ubiquitination. In terms of biological role, probable E3 ubiquitin-protein ligase that may possess E3 ubiquitin ligase activity in vitro. In Arabidopsis thaliana (Mouse-ear cress), this protein is Probable E3 ubiquitin-protein ligase RHC2A.